The following is a 166-amino-acid chain: Phosphopantetheine adenylyltransferase (166 aa).

Thr-10 provides a ligand contact to substrate. Residues 10–11 and His-18 contribute to the ATP site; that span reads TF. The substrate site is built by Lys-42, Leu-74, and Arg-88. ATP-binding positions include 89-91, Glu-99, and 124-130; these read GLR and NSFISSS.

This sequence belongs to the bacterial CoaD family. Homohexamer. It depends on Mg(2+) as a cofactor.

It localises to the cytoplasm. The enzyme catalyses (R)-4'-phosphopantetheine + ATP + H(+) = 3'-dephospho-CoA + diphosphate. The protein operates within cofactor biosynthesis; coenzyme A biosynthesis; CoA from (R)-pantothenate: step 4/5. Functionally, reversibly transfers an adenylyl group from ATP to 4'-phosphopantetheine, yielding dephospho-CoA (dPCoA) and pyrophosphate. The polypeptide is Phosphopantetheine adenylyltransferase (Idiomarina loihiensis (strain ATCC BAA-735 / DSM 15497 / L2-TR)).